The following is a 214-amino-acid chain: Oocyte zinc finger protein XlCOF10 (214 aa).

7 consecutive C2H2-type zinc fingers follow at residues 1 to 23 (FSCSQCDESFVQRSELELHRQLH), 29 to 51 (FTCSECGKCFKRFSLLKEHHRIH), 57 to 79 (FTCDECGKCFTQKSHMTAHQKSH), 85 to 107 (FCCSECGKHFKQNSQLVVHQRTH), 113 to 135 (FTCTESGQWFKLQSYLTEHQKSH), 141 to 163 (FSCSDCGKCFKRHSLFIEHQRIH), and 169 to 191 (FSCSVCEKTFTRRSHLTAHEKCH).

The protein belongs to the krueppel C2H2-type zinc-finger protein family.

The protein localises to the nucleus. In terms of biological role, may be involved in transcriptional regulation. In Xenopus laevis (African clawed frog), this protein is Oocyte zinc finger protein XlCOF10.